The following is a 599-amino-acid chain: Aspartate--tRNA(Asp/Asn) ligase (599 aa).

Glu172 provides a ligand contact to L-aspartate. The aspartate stretch occupies residues 196–199 (QLFK). Arg218 is an L-aspartate binding site. Residues 218 to 220 (RDE) and Gln227 contribute to the ATP site. His451 lines the L-aspartate pocket. Residue Glu485 participates in ATP binding. Arg492 lines the L-aspartate pocket. 537–540 (GLDR) contacts ATP.

The protein belongs to the class-II aminoacyl-tRNA synthetase family. Type 1 subfamily. As to quaternary structure, homodimer.

It is found in the cytoplasm. The enzyme catalyses tRNA(Asx) + L-aspartate + ATP = L-aspartyl-tRNA(Asx) + AMP + diphosphate. Functionally, aspartyl-tRNA synthetase with relaxed tRNA specificity since it is able to aspartylate not only its cognate tRNA(Asp) but also tRNA(Asn). Reaction proceeds in two steps: L-aspartate is first activated by ATP to form Asp-AMP and then transferred to the acceptor end of tRNA(Asp/Asn). The sequence is that of Aspartate--tRNA(Asp/Asn) ligase from Aromatoleum aromaticum (strain DSM 19018 / LMG 30748 / EbN1) (Azoarcus sp. (strain EbN1)).